The primary structure comprises 154 residues: Putative pre-16S rRNA nuclease (154 aa).

The protein belongs to the YqgF nuclease family.

The protein resides in the cytoplasm. Its function is as follows. Could be a nuclease involved in processing of the 5'-end of pre-16S rRNA. This chain is Putative pre-16S rRNA nuclease, found in Gluconacetobacter diazotrophicus (strain ATCC 49037 / DSM 5601 / CCUG 37298 / CIP 103539 / LMG 7603 / PAl5).